The sequence spans 490 residues: GTPase Der (490 aa).

2 EngA-type G domains span residues 3 to 166 (PVVA…AEAM) and 200 to 373 (IKLA…DSAT). Residues 9–16 (GRPNVGKS), 56–60 (DTGGI), 118–121 (NKVD), 206–213 (GKPNVGKS), 253–257 (DTAGV), and 318–321 (NKWD) contribute to the GTP site. A KH-like domain is found at 374–458 (RRVSTSMLTR…PIQLRFQEGG (85 aa)). The disordered stretch occupies residues 470 to 490 (TVSQERRRKRMVGHIRDKNKD).

Belongs to the TRAFAC class TrmE-Era-EngA-EngB-Septin-like GTPase superfamily. EngA (Der) GTPase family. As to quaternary structure, associates with the 50S ribosomal subunit.

Functionally, GTPase that plays an essential role in the late steps of ribosome biogenesis. This Shewanella pealeana (strain ATCC 700345 / ANG-SQ1) protein is GTPase Der.